Here is a 200-residue protein sequence, read N- to C-terminus: Early E1A 21 kDa protein (200 aa).

The tract at residues Gln78–Ser98 is disordered. The LXCXE motif, interaction with host RB1 signature appears at Leu114–Glu118. A zinc finger spans residues Cys136–Cys151. A Nuclear localization signal motif is present at residues Ser196 to Glu200.

As to quaternary structure, interaction with host RB1 induces the aberrant dissociation of RB1-E2F1 complex thereby disrupting RB1's activity.

E1A protein has both transforming and trans-activating activities. Plays a role in viral genome replication by driving entry of quiescent cells into the cell cycle. Disrupts the function of host retinoblastoma protein RB1/pRb and isoform early E1A 26 kDa protein stabilizes TP53, which are key regulators of the cell cycle. Induces the disassembly of the E2F1 transcription factors from RB1 by direct competition for the same binding site on RB1, with subsequent transcriptional activation of E2F1-regulated S-phase genes. Inactivation of the ability of RB1 to arrest the cell cycle is critical for cellular transformation, uncontrolled cellular growth and proliferation induced by viral infection. Stimulation of progression from G1 to S phase allows the virus to efficiently use the cellular DNA replicating machinery to achieve viral genome replication. In Murine adenovirus A serotype 1 (MAdV-1), this protein is Early E1A 21 kDa protein.